The sequence spans 1397 residues: ABC transporter G family member 41 (1397 aa).

One can recognise an ABC transporter 1 domain in the interval 138 to 411 (SLSKFVCSKK…FEGCGFKCPE (274 aa)). 171–178 (GPPGCGKT) serves as a coordination point for ATP. The region spanning 489-701 (EMLKACSRRE…AEIGLTANEF (213 aa)) is the ABC transmembrane type-2 1 domain. Helical transmembrane passes span 507–527 (FIYLFKSGLLVFNALVTMTVF), 549–570 (ALFRLLADGLPELTLTISRLGV), 594–614 (IPLSVLDSFIWTVLTYYVIGY), 625–645 (FIILLTFHLSCISMFRAIASI), 651–671 (ACSITGAISVLLLALFGGFVI), and 735–755 (TAFGALVGFVLFFNALYTLAL). The ABC transporter 2 domain occupies 805–1050 (VTFQNVQYYI…VIKYFESIPG (246 aa)). 842–849 (GVSGAGKT) contributes to the ATP binding site. The 215-residue stretch at 1122–1336 (GQLKACLWKQ…VLEGLLSSQY (215 aa)) folds into the ABC transmembrane type-2 2 domain. Helical transmembrane passes span 1141-1161 (HNLTRIVFILLNSLLCSLLFW), 1173-1193 (LFSIFGSMYTIVIFSGINNCA), 1229-1249 (VPYSLLQSLLCTIIVYPMIGY), 1260-1280 (LYSIFCSLLIFNYCGMLMVAL), 1286-1306 (MALTLRSTFFSMVNLFAGFVM), 1314-1334 (WWIWMYYLSPTSWVLEGLLSS), and 1369-1389 (VVAFVLIAFPIIVASLFAFFM).

This sequence belongs to the ABC transporter superfamily. ABCG family. PDR (TC 3.A.1.205) subfamily. In terms of tissue distribution, confined to roots.

Its subcellular location is the membrane. May be a general defense protein. In Arabidopsis thaliana (Mouse-ear cress), this protein is ABC transporter G family member 41 (ABCG41).